The primary structure comprises 99 residues: Plastocyanin B'/B'' (99 aa).

Residues 1 to 99 (IEVLLGSDDG…AGMVGKVTVN (99 aa)) enclose the Plastocyanin-like domain. Positions 37, 84, 87, and 92 each coordinate Cu cation.

This sequence belongs to the plastocyanin family. Cu(2+) serves as cofactor.

It is found in the plastid. Its subcellular location is the chloroplast thylakoid membrane. In terms of biological role, participates in electron transfer between P700 and the cytochrome b6-f complex in photosystem I. The sequence is that of Plastocyanin B'/B'' from Nicotiana tabacum (Common tobacco).